A 162-amino-acid polypeptide reads, in one-letter code: Peptidyl-prolyl cis-trans isomerase (162 aa).

Residues 16 to 162 (KTAYATIKTN…IESVVFSPSL (147 aa)) form the PPIase cyclophilin-type domain.

Belongs to the cyclophilin-type PPIase family.

It catalyses the reaction [protein]-peptidylproline (omega=180) = [protein]-peptidylproline (omega=0). In terms of biological role, PPIases accelerate the folding of proteins. It catalyzes the cis-trans isomerization of proline imidic peptide bonds in oligopeptides. The polypeptide is Peptidyl-prolyl cis-trans isomerase (ppiA) (Helicobacter pylori (strain J99 / ATCC 700824) (Campylobacter pylori J99)).